An 80-amino-acid chain; its full sequence is Conotoxin Bt6.5 (80 aa).

The signal sequence occupies residues 1–22 (MKLTCVLIIAVLFLTACQLATA). Positions 23-45 (KTYSTGRQKHRALRSTDKNIKLS) are excised as a propeptide. Intrachain disulfides connect Cys-48/Cys-62, Cys-55/Cys-66, and Cys-61/Cys-73.

The protein belongs to the conotoxin O1 superfamily. As to expression, expressed by the venom duct.

The protein localises to the secreted. Functionally, when injected intracranially in mice, induces a series of symptoms such as quivering, climbing, scratching, barrel rolling and paralysis of limbs. Unexpectedly, no effect is observed on ionic currents when tested on locust DUM neuron. This chain is Conotoxin Bt6.5, found in Conus betulinus (Beech cone).